A 530-amino-acid chain; its full sequence is Bifunctional purine biosynthesis protein PurH (530 aa).

The MGS-like domain maps to 1–148 (MNNARPIRRA…KNHKDVTIVV (148 aa)).

This sequence belongs to the PurH family.

It catalyses the reaction (6R)-10-formyltetrahydrofolate + 5-amino-1-(5-phospho-beta-D-ribosyl)imidazole-4-carboxamide = 5-formamido-1-(5-phospho-D-ribosyl)imidazole-4-carboxamide + (6S)-5,6,7,8-tetrahydrofolate. The enzyme catalyses IMP + H2O = 5-formamido-1-(5-phospho-D-ribosyl)imidazole-4-carboxamide. It functions in the pathway purine metabolism; IMP biosynthesis via de novo pathway; 5-formamido-1-(5-phospho-D-ribosyl)imidazole-4-carboxamide from 5-amino-1-(5-phospho-D-ribosyl)imidazole-4-carboxamide (10-formyl THF route): step 1/1. The protein operates within purine metabolism; IMP biosynthesis via de novo pathway; IMP from 5-formamido-1-(5-phospho-D-ribosyl)imidazole-4-carboxamide: step 1/1. This Aliivibrio fischeri (strain MJ11) (Vibrio fischeri) protein is Bifunctional purine biosynthesis protein PurH.